Consider the following 288-residue polypeptide: Eukaryotic translation initiation factor 3 subunit G (288 aa).

The disordered stretch occupies residues 1–33; it reads MSRVANNRDWADDEDLEDSNELPQSTTTTNKDG. The segment covering 11–20 has biased composition (acidic residues); that stretch reads ADDEDLEDSN. Over residues 21-33 the composition is skewed to polar residues; sequence ELPQSTTTTNKDG. The RRM domain maps to 208-286; it reads ATLRVTNVSE…LILRVEFAKK (79 aa).

It belongs to the eIF-3 subunit G family. As to quaternary structure, component of the eukaryotic translation initiation factor 3 (eIF-3) complex.

It localises to the cytoplasm. Its function is as follows. RNA-binding component of the eukaryotic translation initiation factor 3 (eIF-3) complex, which is involved in protein synthesis of a specialized repertoire of mRNAs and, together with other initiation factors, stimulates binding of mRNA and methionyl-tRNAi to the 40S ribosome. The eIF-3 complex specifically targets and initiates translation of a subset of mRNAs involved in cell proliferation. This subunit can bind 18S rRNA. The protein is Eukaryotic translation initiation factor 3 subunit G (tif35) of Sclerotinia sclerotiorum (strain ATCC 18683 / 1980 / Ss-1) (White mold).